The chain runs to 422 residues: Enolase (422 aa).

A Mg(2+)-binding site is contributed by S41. E163 contributes to the (2R)-2-phosphoglycerate binding site. The active-site Proton donor is the E204. 3 residues coordinate Mg(2+): D241, E284, and D311. Residue K336 is the Proton acceptor of the active site. The (2R)-2-phosphoglycerate site is built by R365, S366, and K387.

This sequence belongs to the enolase family. Homodimer. Component of the RNA degradosome, a multiprotein complex involved in RNA processing and mRNA degradation. Mg(2+) serves as cofactor.

It localises to the cytoplasm. It is found in the secreted. Its subcellular location is the cell surface. It carries out the reaction (2R)-2-phosphoglycerate = phosphoenolpyruvate + H2O. The protein operates within carbohydrate degradation; glycolysis; pyruvate from D-glyceraldehyde 3-phosphate: step 4/5. In terms of biological role, catalyzes the reversible conversion of 2-phosphoglycerate (2-PG) into phosphoenolpyruvate (PEP). It is essential for the degradation of carbohydrates via glycolysis. The chain is Enolase from Legionella pneumophila subsp. pneumophila (strain Philadelphia 1 / ATCC 33152 / DSM 7513).